We begin with the raw amino-acid sequence, 647 residues long: DNA mismatch repair protein MutL (647 aa).

It belongs to the DNA mismatch repair MutL/HexB family.

Functionally, this protein is involved in the repair of mismatches in DNA. It is required for dam-dependent methyl-directed DNA mismatch repair. May act as a 'molecular matchmaker', a protein that promotes the formation of a stable complex between two or more DNA-binding proteins in an ATP-dependent manner without itself being part of a final effector complex. This is DNA mismatch repair protein MutL from Bacillus thuringiensis (strain Al Hakam).